Consider the following 259-residue polypeptide: Protein FAM220A (259 aa).

Disordered regions lie at residues 1-44 (MRDR…ADAP) and 131-154 (LGGG…RVSR). Residues 138 to 152 (TDGHRGQCPKGEPRV) are compositionally biased toward basic and acidic residues.

In terms of assembly, interacts with transcriptional activator STAT3; the interaction occurs in both the nucleus and the cytoplasm, is enhanced by IL6 and promotes STAT3 dephosphorylation, leading to negative regulation of STAT3 transcriptional activator activity. Can interact with both unphosphorylated and phosphorylated STAT3 but interacts preferentially with phosphorylated STAT3 in the nucleus. Interacts with protein phosphatase PTPN2/TC45; this promotes interaction of PTPN2 with STAT3, leading to dephosphorylation of STAT3 by PTPN2.

Its subcellular location is the nucleus. The protein localises to the cytoplasm. The protein resides in the cytoplasmic vesicle. It is found in the secretory vesicle. It localises to the acrosome. Its function is as follows. Promotes dephosphorylation of transcriptional activator STAT3 by interacting with both STAT3 and protein phosphatase PTPN2. This promotes interaction of PTPN2 with STAT3 and mediates STAT3 dephosphorylation by PTPN2, leading to negative regulation of STAT3 transcriptional activator activity. May be required for spermiogenesis or sperm function. The chain is Protein FAM220A from Homo sapiens (Human).